The sequence spans 531 residues: Dimethylnonatriene synthase (531 aa).

A helical membrane pass occupies residues 6-26 (TMSVAMALAAAIFVVLCSVVA). C464 is a heme binding site.

Belongs to the cytochrome P450 family. Heme serves as cofactor.

It localises to the membrane. The enzyme catalyses (6E,10E)-geranyllinalool + reduced [NADPH--hemoprotein reductase] + O2 = (3E,7E)-4,8,12-trimethyltrideca 1,3,7,11-tetraene + but-3-en-2-one + oxidized [NADPH--hemoprotein reductase] + 2 H2O + H(+). It carries out the reaction (3S,6E)-nerolidol + reduced [NADPH--hemoprotein reductase] + O2 = (3E)-4,8-dimethylnona-1,3,7-triene + but-3-en-2-one + oxidized [NADPH--hemoprotein reductase] + 2 H2O + H(+). It functions in the pathway secondary metabolite biosynthesis; terpenoid biosynthesis. Involved in the biosynthesis of homoterpenes, attractants of herbivores parasitoids and predators (e.g. predatory mites and parasitoid wasps). Component of the volatile terpenes biosynthesis pathways. Converts mainly nerolidol to dimethylnonatriene (DMNT) and, to a lower extent, geranyllinalool to trimethyltridecatetraene (TMTT). This is Dimethylnonatriene synthase from Zea mays (Maize).